We begin with the raw amino-acid sequence, 315 residues long: Type II methyltransferase M.Bsp6I (315 aa).

The 314-residue stretch at 2-315 (LQIASLFAGV…IAENIYKSML (314 aa)) folds into the SAM-dependent MTase C5-type domain. C73 is an active-site residue.

It belongs to the class I-like SAM-binding methyltransferase superfamily. C5-methyltransferase family.

The catalysed reaction is a 2'-deoxycytidine in DNA + S-adenosyl-L-methionine = a 5-methyl-2'-deoxycytidine in DNA + S-adenosyl-L-homocysteine + H(+). Its function is as follows. A methylase that recognizes the double-stranded sequence 5'-GCNGC-3', methylates C-? on both strands, and protects the DNA from cleavage by the Bsp6I endonuclease. In Bacillus sp. (strain RFL6), this protein is Type II methyltransferase M.Bsp6I.